The sequence spans 427 residues: Ribosomal protein uS12 methylthiotransferase RimO (427 aa).

In terms of domain architecture, MTTase N-terminal spans 1–116 (MNFYVDVLGC…IAENIGKESI (116 aa)). Cys-10, Cys-46, Cys-79, Cys-145, Cys-149, and Cys-152 together coordinate [4Fe-4S] cluster. The Radical SAM core domain occupies 131 to 360 (VDEKQYAYVK…MEEQSKISFE (230 aa)). In terms of domain architecture, TRAM spans 363-426 (EKMVGKTFKV…VYDLEGKIVE (64 aa)).

It belongs to the methylthiotransferase family. RimO subfamily. The cofactor is [4Fe-4S] cluster.

It localises to the cytoplasm. The catalysed reaction is L-aspartate(89)-[ribosomal protein uS12]-hydrogen + (sulfur carrier)-SH + AH2 + 2 S-adenosyl-L-methionine = 3-methylsulfanyl-L-aspartate(89)-[ribosomal protein uS12]-hydrogen + (sulfur carrier)-H + 5'-deoxyadenosine + L-methionine + A + S-adenosyl-L-homocysteine + 2 H(+). Functionally, catalyzes the methylthiolation of an aspartic acid residue of ribosomal protein uS12. The polypeptide is Ribosomal protein uS12 methylthiotransferase RimO (Thermosipho africanus (strain TCF52B)).